We begin with the raw amino-acid sequence, 352 residues long: MNGTEGPFFYIPMVNTTGVVRSPYEYPQYYLVNPAAYACLGAYMFFLILVGFPVNFLTLYVTLEHKKLRTPLNYILLNLAVADLFMVFGGFTTTIYTSMHGYFVLGRLGCNIEGFFATLGGEIALWSLVVLAIERWVVVCKPISNFRFGENHAIMGVAFTWFMASACAVPPLVGWSRYIPEGMQCSCGIDYYTRAEGFNNESFVIYMFTVHFCIPLAVVGFCYGRLLCAVKEAAAAQQESETTQRAEREVSRMVVIMVIGFLVCWLPYASVAWYIFTHQGSEFGPLFMTIPAFFAKSSSIYNPMIYICMNKQFRHCMITTLCCGKNPFEEEEGASTTKTEASSVSSSSVSPA.

At M1–A36 the chain is on the extracellular side. Residues N2 and N15 are each glycosylated (N-linked (GlcNAc...) asparagine). A helical transmembrane segment spans residues Y37–V61. Topologically, residues T62 to N73 are cytoplasmic. A helical transmembrane segment spans residues Y74–Y96. The Extracellular portion of the chain corresponds to T97 to C110. C110 and C187 are joined by a disulfide. Residues N111–I133 form a helical membrane-spanning segment. Positions E134 to W136 match the 'Ionic lock' involved in activated form stabilization motif. Over E134–H152 the chain is Cytoplasmic. Residues A153–V173 traverse the membrane as a helical segment. The Extracellular portion of the chain corresponds to G174–S202. N-linked (GlcNAc...) asparagine glycosylation occurs at N200. A helical membrane pass occupies residues F203–G224. The Cytoplasmic portion of the chain corresponds to R225–R252. A helical membrane pass occupies residues M253–Y274. Over I275 to L286 the chain is Extracellular. The helical transmembrane segment at F287–C308 threads the bilayer. Position 296 is an N6-(retinylidene)lysine (K296). The Cytoplasmic segment spans residues M309 to A352. 2 S-palmitoyl cysteine lipidation sites follow: C322 and C323. The interval E331–A352 is disordered. The span at S342 to A352 shows a compositional bias: low complexity.

It belongs to the G-protein coupled receptor 1 family. Opsin subfamily. Phosphorylated on some or all of the serine and threonine residues present in the C-terminal region. Post-translationally, contains one covalently linked retinal chromophore.

Its subcellular location is the membrane. It is found in the cell projection. It localises to the cilium. The protein localises to the photoreceptor outer segment. Its function is as follows. Photoreceptor required for image-forming vision at low light intensity. While most salt water fish species use retinal as chromophore, most freshwater fish use 3-dehydroretinal, or a mixture of retinal and 3-dehydroretinal. Light-induced isomerization of 11-cis to all-trans retinal triggers a conformational change that activates signaling via G-proteins. Subsequent receptor phosphorylation mediates displacement of the bound G-protein alpha subunit by arrestin and terminates signaling. This Gobius niger (Black goby) protein is Rhodopsin (rho).